The chain runs to 159 residues: Large ribosomal subunit protein uL11 (159 aa).

It belongs to the universal ribosomal protein uL11 family. As to quaternary structure, part of the ribosomal stalk of the 50S ribosomal subunit. Interacts with L10 and the large rRNA to form the base of the stalk. L10 forms an elongated spine to which L12 dimers bind in a sequential fashion forming a multimeric L10(L12)X complex.

In terms of biological role, forms part of the ribosomal stalk which helps the ribosome interact with GTP-bound translation factors. This chain is Large ribosomal subunit protein uL11, found in Methanococcus vannielii (strain ATCC 35089 / DSM 1224 / JCM 13029 / OCM 148 / SB).